The chain runs to 54 residues: Sec-independent protein translocase protein TatA (54 aa).

The helical transmembrane segment at Met-1–Ala-21 threads the bilayer.

Belongs to the TatA/E family. The Tat system comprises two distinct complexes: a TatABC complex, containing multiple copies of TatA, TatB and TatC subunits, and a separate TatA complex, containing only TatA subunits. Substrates initially bind to the TatABC complex, which probably triggers association of the separate TatA complex to form the active translocon.

The protein resides in the cell inner membrane. Part of the twin-arginine translocation (Tat) system that transports large folded proteins containing a characteristic twin-arginine motif in their signal peptide across membranes. TatA could form the protein-conducting channel of the Tat system. This Rickettsia prowazekii (strain Madrid E) protein is Sec-independent protein translocase protein TatA.